The primary structure comprises 31 residues: Cytochrome b6-f complex subunit 6 (31 aa).

Residues 4 to 26 (ITSYFGFLLAASTITTALFIGLS) form a helical membrane-spanning segment.

Belongs to the PetL family. In terms of assembly, the 4 large subunits of the cytochrome b6-f complex are cytochrome b6, subunit IV (17 kDa polypeptide, PetD), cytochrome f and the Rieske protein, while the 4 small subunits are PetG, PetL, PetM and PetN. The complex functions as a dimer.

It is found in the plastid. The protein localises to the chloroplast thylakoid membrane. Its function is as follows. Component of the cytochrome b6-f complex, which mediates electron transfer between photosystem II (PSII) and photosystem I (PSI), cyclic electron flow around PSI, and state transitions. PetL is important for photoautotrophic growth as well as for electron transfer efficiency and stability of the cytochrome b6-f complex. The protein is Cytochrome b6-f complex subunit 6 of Acorus calamus (Sweet flag).